The sequence spans 604 residues: Aspartate--tRNA(Asp/Asn) ligase (604 aa).

E177 is a binding site for L-aspartate. The segment at 201 to 204 (QLFK) is aspartate. R223 is an L-aspartate binding site. ATP-binding positions include 223-225 (RDE) and Q232. H457 provides a ligand contact to L-aspartate. Position 495 (E495) interacts with ATP. R502 provides a ligand contact to L-aspartate. 547-550 (GLDR) contacts ATP.

This sequence belongs to the class-II aminoacyl-tRNA synthetase family. Type 1 subfamily. In terms of assembly, homodimer.

Its subcellular location is the cytoplasm. It carries out the reaction tRNA(Asx) + L-aspartate + ATP = L-aspartyl-tRNA(Asx) + AMP + diphosphate. In terms of biological role, aspartyl-tRNA synthetase with relaxed tRNA specificity since it is able to aspartylate not only its cognate tRNA(Asp) but also tRNA(Asn). Reaction proceeds in two steps: L-aspartate is first activated by ATP to form Asp-AMP and then transferred to the acceptor end of tRNA(Asp/Asn). The chain is Aspartate--tRNA(Asp/Asn) ligase from Synechococcus sp. (strain RCC307).